Here is a 206-residue protein sequence, read N- to C-terminus: MTDLSITPLPAQAAPVQPASSAELVVLLDEAGNQIGTAPKSSVHGADTALHLAFSCHVFDDDGRLLVTRRALGKVAWPGVWTNSFCGHPAPAEPLPHAVRRRAEFELGLELRDVEPVLPFFRYRATDASGIVEHEICPVYTARTSSVPAPHPDEVLDLAWVEPGELATAVRAAPWAFSPWLVLQAQLLPFLGGHADARVRTEALVS.

H44 and H51 together coordinate Mn(2+). Residues 49 to 183 (ALHLAFSCHV…PWAFSPWLVL (135 aa)) enclose the Nudix hydrolase domain. C86 is an active-site residue. Residue C86 participates in Mg(2+) binding. H88 is a binding site for Mn(2+). Mg(2+) is bound at residue E106. Mn(2+) contacts are provided by E133 and E135. E135 is a catalytic residue.

The protein belongs to the IPP isomerase type 1 family. The cofactor is Mg(2+). It depends on Mn(2+) as a cofactor.

It localises to the cytoplasm. It carries out the reaction isopentenyl diphosphate = dimethylallyl diphosphate. Its pathway is isoprenoid biosynthesis; dimethylallyl diphosphate biosynthesis; dimethylallyl diphosphate from isopentenyl diphosphate: step 1/1. In terms of biological role, catalyzes the 1,3-allylic rearrangement of the homoallylic substrate isopentenyl (IPP) to its highly electrophilic allylic isomer, dimethylallyl diphosphate (DMAPP). The polypeptide is Isopentenyl-diphosphate Delta-isomerase (Agromyces mediolanus (Corynebacterium mediolanum)).